Here is an 899-residue protein sequence, read N- to C-terminus: Bifunctional uridylyltransferase/uridylyl-removing enzyme (899 aa).

Residues 1–347 (MFISDPTDSL…PESERPEKSV (347 aa)) are uridylyltransferase. Residues 348–718 (LNARFNRVGD…EHRELALDAV (371 aa)) are uridylyl-removing. Residues 465-581 (VDAHILLLIR…TKFANLVGNV (117 aa)) enclose the HD domain. ACT domains lie at 719 to 804 (QIFI…RLPR) and 827 to 899 (VMSL…TPSC).

The protein belongs to the GlnD family. It depends on Mg(2+) as a cofactor.

The catalysed reaction is [protein-PII]-L-tyrosine + UTP = [protein-PII]-uridylyl-L-tyrosine + diphosphate. It carries out the reaction [protein-PII]-uridylyl-L-tyrosine + H2O = [protein-PII]-L-tyrosine + UMP + H(+). Its activity is regulated as follows. Uridylyltransferase (UTase) activity is inhibited by glutamine, while glutamine activates uridylyl-removing (UR) activity. Functionally, modifies, by uridylylation and deuridylylation, the PII regulatory proteins (GlnB and homologs), in response to the nitrogen status of the cell that GlnD senses through the glutamine level. Under low glutamine levels, catalyzes the conversion of the PII proteins and UTP to PII-UMP and PPi, while under higher glutamine levels, GlnD hydrolyzes PII-UMP to PII and UMP (deuridylylation). Thus, controls uridylylation state and activity of the PII proteins, and plays an important role in the regulation of nitrogen assimilation and metabolism. The polypeptide is Bifunctional uridylyltransferase/uridylyl-removing enzyme (Psychrobacter sp. (strain PRwf-1)).